A 568-amino-acid chain; its full sequence is AT-rich interactive domain-containing protein 3B (568 aa).

Met-1 carries the N-acetylmethionine modification. Residues 1 to 22 (MEPLQQQQQQQQQKQPQQPLLQ) are compositionally biased toward low complexity. A disordered region spans residues 1-174 (MEPLQQQQQQ…SVPTAGQPSW (174 aa)). Ser-87 carries the phosphoserine modification. Residues 88-107 (EPEEEEGGLEDEDGDDDVAE) show a composition bias toward acidic residues. Positions 151 to 160 (TKEDHTKDAS) are enriched in basic and acidic residues. The tract at residues 201–374 (SRDFAKLYEL…SSPKIRFSIL (174 aa)) is interaction with RB1. The ARID domain occupies 213–305 (DPERKEFLDD…YLYAYECEKK (93 aa)). A Phosphoserine modification is found at Ser-309. Arg-370 carries the asymmetric dimethylarginine modification. The tract at residues 378 to 403 (SSSGTSASSPRIPPASTLRKGDGVPV) is disordered. The REKLES domain maps to 425 to 522 (GPLEHLRERL…GVLFAQKPVV (98 aa)). The tract at residues 495-518 (SNIGSINMSVDIDGTTYTGVLFAQ) is interaction with ARID3A. Over residues 529–559 (TPQSIGSSASSSNSSSSHCSPSPTSSRGTPS) the composition is skewed to low complexity. Residues 529 to 568 (TPQSIGSSASSSNSSSSHCSPSPTSSRGTPSAEPSTSWSL) form a disordered region.

Heterodimer with ARID3A. Interacts with unphosphorylated RB1. In terms of tissue distribution, expressed at high levels in testis. Also expressed in prostate, thyroid and thymus.

The protein localises to the nucleus. Functionally, transcription factor involved in the production of cranial mesenchymal tissues. Favors nuclear targeting of ARID3A. The protein is AT-rich interactive domain-containing protein 3B (Arid3b) of Mus musculus (Mouse).